We begin with the raw amino-acid sequence, 352 residues long: Non-structural protein 2 (352 aa).

Belongs to the aquareoviridae NS2 protein family. Homomultimer.

Protein that binds to ssRNA and may be involved in genome packaging. This Aquareovirus C (isolate Golden shiner/USA/GSRV/1977) (AQRV-C) protein is Non-structural protein 2 (S9).